Reading from the N-terminus, the 446-residue chain is tRNA-2-methylthio-N(6)-dimethylallyladenosine synthase (446 aa).

The MTTase N-terminal domain occupies 3-124 (KKLYIKTYGC…LPELISKVVR (122 aa)). 6 residues coordinate [4Fe-4S] cluster: Cys-12, Cys-48, Cys-87, Cys-162, Cys-166, and Cys-169. A Radical SAM core domain is found at 148–380 (YPQGASSFIS…QKELAAQQLA (233 aa)). The TRAM domain maps to 383–446 (ESCIGSTMKV…LNSLSGEIYR (64 aa)).

This sequence belongs to the methylthiotransferase family. MiaB subfamily. Monomer. It depends on [4Fe-4S] cluster as a cofactor.

Its subcellular location is the cytoplasm. It carries out the reaction N(6)-dimethylallyladenosine(37) in tRNA + (sulfur carrier)-SH + AH2 + 2 S-adenosyl-L-methionine = 2-methylsulfanyl-N(6)-dimethylallyladenosine(37) in tRNA + (sulfur carrier)-H + 5'-deoxyadenosine + L-methionine + A + S-adenosyl-L-homocysteine + 2 H(+). Its function is as follows. Catalyzes the methylthiolation of N6-(dimethylallyl)adenosine (i(6)A), leading to the formation of 2-methylthio-N6-(dimethylallyl)adenosine (ms(2)i(6)A) at position 37 in tRNAs that read codons beginning with uridine. This chain is tRNA-2-methylthio-N(6)-dimethylallyladenosine synthase, found in Rickettsia bellii (strain OSU 85-389).